Here is a 454-residue protein sequence, read N- to C-terminus: Bifunctional protein GlmU (454 aa).

The segment at 1–227 is pyrophosphorylase; it reads MTQLSVVILA…FMEVEGANNR (227 aa). UDP-N-acetyl-alpha-D-glucosamine-binding positions include 9-12, Lys23, Gln74, 79-80, 101-103, Gly138, Glu152, Asn167, and Asn225; these read LAAG, GT, and YGD. Asp103 lines the Mg(2+) pocket. Asn225 contributes to the Mg(2+) binding site. The tract at residues 228 to 248 is linker; the sequence is LQLAALERFYQKTQAEKLLLA. Residues 249-454 are N-acetyltransferase; that stretch reads GVRLIDPARF…QGWQRPTKKK (206 aa). Positions 331 and 349 each coordinate UDP-N-acetyl-alpha-D-glucosamine. Catalysis depends on His361, which acts as the Proton acceptor. Tyr364 and Asn375 together coordinate UDP-N-acetyl-alpha-D-glucosamine. Residues Ala378, 384–385, Ser403, Ala421, and Arg438 each bind acetyl-CoA; that span reads NY.

In the N-terminal section; belongs to the N-acetylglucosamine-1-phosphate uridyltransferase family. It in the C-terminal section; belongs to the transferase hexapeptide repeat family. As to quaternary structure, homotrimer. Mg(2+) serves as cofactor.

The protein resides in the cytoplasm. It catalyses the reaction alpha-D-glucosamine 1-phosphate + acetyl-CoA = N-acetyl-alpha-D-glucosamine 1-phosphate + CoA + H(+). The catalysed reaction is N-acetyl-alpha-D-glucosamine 1-phosphate + UTP + H(+) = UDP-N-acetyl-alpha-D-glucosamine + diphosphate. It functions in the pathway nucleotide-sugar biosynthesis; UDP-N-acetyl-alpha-D-glucosamine biosynthesis; N-acetyl-alpha-D-glucosamine 1-phosphate from alpha-D-glucosamine 6-phosphate (route II): step 2/2. The protein operates within nucleotide-sugar biosynthesis; UDP-N-acetyl-alpha-D-glucosamine biosynthesis; UDP-N-acetyl-alpha-D-glucosamine from N-acetyl-alpha-D-glucosamine 1-phosphate: step 1/1. Its pathway is bacterial outer membrane biogenesis; LPS lipid A biosynthesis. Catalyzes the last two sequential reactions in the de novo biosynthetic pathway for UDP-N-acetylglucosamine (UDP-GlcNAc). The C-terminal domain catalyzes the transfer of acetyl group from acetyl coenzyme A to glucosamine-1-phosphate (GlcN-1-P) to produce N-acetylglucosamine-1-phosphate (GlcNAc-1-P), which is converted into UDP-GlcNAc by the transfer of uridine 5-monophosphate (from uridine 5-triphosphate), a reaction catalyzed by the N-terminal domain. In Actinobacillus pleuropneumoniae serotype 3 (strain JL03), this protein is Bifunctional protein GlmU.